The sequence spans 638 residues: Growth hormone receptor (638 aa).

The first 18 residues, 1–18, serve as a signal peptide directing secretion; that stretch reads MDLWRVFLTLALAVSSDM. Residues 19–265 are Extracellular-facing; the sequence is FPGSGATPAT…TLAACEEDFR (247 aa). 2 disulfides stabilise this stretch: Cys-56/Cys-66 and Cys-101/Cys-112. A glycan (N-linked (GlcNAc...) asparagine) is linked at Asn-115. An intrachain disulfide couples Cys-126 to Cys-140. Residues 151-254 form the Fibronectin type-III domain; the sequence is PPIGLNWTLL…EVLRVTFPQM (104 aa). N-linked (GlcNAc...) asparagine glycans are attached at residues Asn-156, Asn-161, and Asn-200. A WSXWS motif motif is present at residues 240–244; sequence YSEFS. The chain crosses the membrane as a helical span at residues 266–289; it reads FPWFLIIIFGIFGVAVMLFVVIFS. Residues 290-638 are Cytoplasmic-facing; the sequence is KQQRIKMLIL…STDQLNKIMQ (349 aa). Positions 295 to 380 are required for JAK2 binding; it reads KMLILPPVPV…QEKSAGILGA (86 aa). Residues 298 to 306 carry the Box 1 motif motif; it reads ILPPVPVPK. The short motif at 341–350 is the UbE motif element; it reads DSWVEFIELD. The residue at position 342 (Ser-342) is a Phosphoserine. A disordered region spans residues 357-389; sequence KTEESDTDRLLSDDQEKSAGILGAKDDDSGRTS. Residues 363–373 are compositionally biased toward basic and acidic residues; that stretch reads TDRLLSDDQEK. Tyr-487 and Tyr-594 each carry phosphotyrosine.

Belongs to the type I cytokine receptor family. Type 1 subfamily. As to quaternary structure, on growth hormone (GH) binding, forms homodimers and binds JAK2 via a box 1-containing domain. In terms of processing, the soluble form (GHBP) is produced by phorbol ester-promoted proteolytic cleavage at the cell surface (shedding) by ADAM17/TACE. Shedding is inhibited by growth hormone (GH) binding to the receptor probably due to a conformational change in GHR rendering the receptor inaccessible to ADAM17. Post-translationally, on GH binding, phosphorylated on tyrosine residues in the cytoplasmic domain by JAK2. Phosphorylation on either (or all of) Tyr-534, Tyr-566 and/or Tyr-627 is required for STAT5 activation. Phosphorylation on Tyr-333 would seem necessary for JAK2 activation. Ubiquitinated by the ECS(SOCS2) complex following ligand-binding and phosphorylation by JAK2, leading to its degradation by the proteasome. Regulation by the ECS(SOCS2) complex acts as a negative feedback loop of growth hormone receptor signaling. Ubiquitination is not sufficient for GHR internalization. As to expression, highest expression in liver. Also expressed in heart, kidney and muscle.

It is found in the cell membrane. Its subcellular location is the secreted. Its function is as follows. Receptor for pituitary gland growth hormone involved in regulating postnatal body growth. On ligand binding, couples to, and activates the JAK2/STAT5 pathway. Receptor for pituitary gland growth hormone (GH1) involved in regulating postnatal body growth. On ligand binding, couples to the JAK2/STAT5 pathway. Functionally, the soluble form (GHBP) acts as a reservoir of growth hormone in plasma and may be a modulator/inhibitor of GH signaling. The polypeptide is Growth hormone receptor (Ghr) (Rattus norvegicus (Rat)).